A 430-amino-acid polypeptide reads, in one-letter code: S-adenosylmethionine synthase (430 aa).

Residue His-14 participates in ATP binding. Mg(2+) is bound at residue Asp-16. K(+) is bound at residue Glu-42. Positions 55 and 98 each coordinate L-methionine. The segment at 98 to 108 (QSADINRGVER) is flexible loop. ATP is bound by residues 164–166 (DAK), 254–255 (KF), Asp-263, 269–270 (RK), Ala-286, and Lys-290. Position 263 (Asp-263) interacts with L-methionine. Position 294 (Lys-294) interacts with L-methionine.

The protein belongs to the AdoMet synthase family. As to quaternary structure, homotetramer; dimer of dimers. Mg(2+) serves as cofactor. It depends on K(+) as a cofactor.

Its subcellular location is the cytoplasm. It catalyses the reaction L-methionine + ATP + H2O = S-adenosyl-L-methionine + phosphate + diphosphate. It participates in amino-acid biosynthesis; S-adenosyl-L-methionine biosynthesis; S-adenosyl-L-methionine from L-methionine: step 1/1. In terms of biological role, catalyzes the formation of S-adenosylmethionine (AdoMet) from methionine and ATP. The overall synthetic reaction is composed of two sequential steps, AdoMet formation and the subsequent tripolyphosphate hydrolysis which occurs prior to release of AdoMet from the enzyme. This is S-adenosylmethionine synthase from Bacteroides fragilis (strain ATCC 25285 / DSM 2151 / CCUG 4856 / JCM 11019 / LMG 10263 / NCTC 9343 / Onslow / VPI 2553 / EN-2).